A 227-amino-acid polypeptide reads, in one-letter code: Riboflavin kinase (227 aa).

Residues Met-1–Phe-92 form an H-T-H motif-like region. Residues Leu-93–Val-227 are riboflavin kinase. Gly-102–Ala-107 serves as a coordination point for CDP. Thr-131 and Asn-133 together coordinate Mg(2+). 2 residues coordinate FMN: Thr-194 and Glu-202. Val-207 to Arg-210 is a binding site for CDP.

The protein belongs to the archaeal riboflavin kinase family. Mg(2+) is required as a cofactor.

The enzyme catalyses riboflavin + CTP = CDP + FMN + H(+). Its pathway is cofactor biosynthesis; FMN biosynthesis; FMN from riboflavin (CTP route): step 1/1. Its function is as follows. Catalyzes the CTP-dependent phosphorylation of riboflavin (vitamin B2) to form flavin mononucleotide (FMN). This Thermofilum pendens (strain DSM 2475 / Hrk 5) protein is Riboflavin kinase (ribK).